Consider the following 515-residue polypeptide: Thioredoxin domain-containing protein 2 (515 aa).

A disordered region spans residues 1 to 23; the sequence is MTLNNGGKANERGSNENPLQALS. 2 positions are modified to phosphoserine: serine 14 and serine 39. A disordered region spans residues 51–390; that stretch reads TLHMSTEESE…NTIKSSEEDV (340 aa). Composition is skewed to polar residues over residues 61–75 and 85–136; these read FPQQVSSTPMFSENT and KPSS…TNST. 21 consecutive repeat copies span residues 92-106, 107-121, 122-136, 137-151, 152-166, 167-181, 182-196, 197-211, 212-226, 227-241, 242-256, 257-271, 272-286, 287-301, 302-316, 317-331, 332-346, 347-362, 363-375, 376-390, and 391-405. The segment at 92 to 405 is 21 X 15 AA approximate tandem repeat of Q-P-K-X-G-D-I-P-K-S-[PS]-E-[KE]-X-I; sequence QLKQENISKS…KLLGLGAEIE (314 aa). Composition is skewed to basic and acidic residues over residues 137 to 293 and 302 to 358; these read HYRE…ETKV and QSKE…KSPE. Serine 146 is subject to Phosphoserine. The span at 375-384 shows a compositional bias: polar residues; that stretch reads IQSQEGNTIK. One can recognise a Thioredoxin domain in the interval 398-515; it reads LGLGAEIETL…KLERSISELK (118 aa). Cysteine 442 and cysteine 445 are oxidised to a cystine.

In terms of tissue distribution, testis-specific. Strongly expressed in the testicular seminiferous tubules, mostly in the round spermatids.

It localises to the cytoplasm. In terms of biological role, probably plays a regulatory role in sperm development. May participate in regulation of fibrous sheath (FS) assembly by supporting the formation of disulfide bonds during sperm tail morphogenesis. May also be required to rectify incorrect disulfide pairing and generate suitable pairs between the FS constituents. Can reduce disulfide bonds in vitro in the presence of NADP and thioredoxin reductase. This chain is Thioredoxin domain-containing protein 2 (Txndc2), found in Mus musculus (Mouse).